Here is a 475-residue protein sequence, read N- to C-terminus: Ankyrin repeat, SAM and basic leucine zipper domain-containing protein 1 (475 aa).

The disordered stretch occupies residues 1–22 (MAAGALRGLPVAGGGESSESED). 3 positions are modified to phosphoserine: Ser17, Ser18, and Ser20. 6 ANK repeats span residues 45–74 (EKKEKFKKAMTIGDVSLIQELLDSGISVDS), 78–107 (YGWTPLMYAASVANAELVRVLLDSGANASF), 110–144 (DKQTILITACSARGSEEQILKCVELLLSRNADPNV), 148–177 (RLMTPIMYAARDGHTQVVALLVAHGAEVNT), 181–210 (NGYTALTWAARQGHKNIVLKLLELGANKML), and 214–243 (DGKMPSEIAKRNKHHEIFNLLSFTLNPLEG). The region spanning 272–334 (SYTAFGDLEV…KILATLKELQ (63 aa)) is the SAM domain.

In terms of assembly, interacts with DDX4, PIWIL1, RANBP9 and TDRD1.

Its subcellular location is the cytoplasm. Plays a central role during spermatogenesis by repressing transposable elements and preventing their mobilization, which is essential for the germline integrity. Acts via the piRNA metabolic process, which mediates the repression of transposable elements during meiosis by forming complexes composed of piRNAs and Piwi proteins and governs the methylation and subsequent repression of transposons. Its association with pi-bodies suggests a participation in the primary piRNAs metabolic process. Required prior to the pachytene stage to facilitate the production of multiple types of piRNAs, including those associated with repeats involved in the regulation of retrotransposons. May act by mediating protein-protein interactions during germ cell maturation. The chain is Ankyrin repeat, SAM and basic leucine zipper domain-containing protein 1 (ASZ1) from Colobus guereza (Mantled guereza).